Reading from the N-terminus, the 130-residue chain is Capsid protein (130 aa).

Residues 32–105 form a viral RNA-binding region; sequence EWISSNSRSQ…FATNDDCALI (74 aa).

It belongs to the Leviviricetes capsid protein family. In terms of assembly, homodimer. The capsid proteins form dimers that assemble by group of 5. Twelve such pentamers are linked together with free dimers. The homodimers binds to the viral RNA via an operator hairpin, but also to many other RNA sequences in the viral genome; this interaction probably shifts the virus from the replicative to the assembly phase and ensures specific encapsidation of the viral genome.

Its subcellular location is the virion. In terms of biological role, capsid protein self-assembles to form an icosahedral capsid with a T=3 symmetry, about 26 nm in diameter, and consisting of 89 capsid proteins dimers (178 capsid proteins). Involved in viral genome encapsidation through the interaction between a capsid protein dimer and the multiple packaging signals present in the RNA genome. The capsid also contains 1 copy of the A2 maturation protein. Acts as a translational repressor of viral replicase synthesis late in infection. This latter function is the result of capsid protein interaction with an RNA hairpin which contains the replicase ribosome-binding site. The chain is Capsid protein from Enterobacteria phage fr (Bacteriophage fr).